The primary structure comprises 656 residues: Pentatricopeptide repeat-containing protein At1g62260, mitochondrial (656 aa).

PPR repeat units follow at residues 70-104 (NTVTWNTMISGYVKRREMNQARKLFDVMPKRDVVT), 105-134 (WNTMISGYVSCGGIRFLEEARKLFDEMPSR), 135-169 (DSFSWNTMISGYAKNRRIGEALLLFEKMPERNAVS), 170-200 (WSAMITGFCQNGEVDSAVVLFRKMPVKDSSP), 203-227 (ALVAGLIKNERLSEAAWVLGQYGSL), 234-264 (LVYAYNTLIVGYGQRGQVEAARCLFDQIPDL), 280-310 (NVVSWNSMIKAYLKVGDVVSARLLFDQMKDR), 311-345 (DTISWNTMIDGYVHVSRMEDAFALFSEMPNRDAHS), 346-372 (WNMMVSGYASVGNVELARHYFEKTPEK), 373-407 (HTVSWNSIIAAYEKNKDYKEAVDLFIRMNIEGEKP), 408-438 (DPHTLTSLLSASTGLVNLRLGMQMHQIVVKT), 442-472 (DVPVHNALITMYSRCGEIMESRRIFDEMKLK), 474-508 (EVITWNAMIGGYAFHGNASEALNLFGSMKSNGIYP), 509-544 (SHITFVSVLNACAHAGLVDEAKAQFVSMMSVYKIEP), and 545-575 (QMEHYSSLVNVTSGQGQFEEAMYIITSMPFE). The tract at residues 580-655 (VWGALLDACR…ERGSSWVDSS (76 aa)) is type E motif.

Belongs to the PPR family. PCMP-E subfamily.

It is found in the mitochondrion. In Arabidopsis thaliana (Mouse-ear cress), this protein is Pentatricopeptide repeat-containing protein At1g62260, mitochondrial (PCMP-E10).